We begin with the raw amino-acid sequence, 117 residues long: Large ribosomal subunit protein uL18 (117 aa).

This sequence belongs to the universal ribosomal protein uL18 family. In terms of assembly, part of the 50S ribosomal subunit; part of the 5S rRNA/L5/L18/L25 subcomplex. Contacts the 5S and 23S rRNAs.

In terms of biological role, this is one of the proteins that bind and probably mediate the attachment of the 5S RNA into the large ribosomal subunit, where it forms part of the central protuberance. The chain is Large ribosomal subunit protein uL18 from Aliivibrio fischeri (strain ATCC 700601 / ES114) (Vibrio fischeri).